A 359-amino-acid chain; its full sequence is MRSIRKRWTICTISLLLIFYKTKEIARTEEHQETQLIGDGELCLSRSLVNSSDKIIRKAGSTIFQHSVQGWRINSSLVLEIRKNILRFLDAERDVSVVKSSFKPGDVIHYVLDRRRTLNISHDLHSLLPEVSPMKNRRFKTCAVVGNSGILLDSGCGKEIDSHNFVIRCNLAPVVEFAADVGTKSDFITMNPSVVQRAFGGFRNESDRAKFVHRLSMLNDSVLWIPAFMVKGGEKHVEWVNALILKNKLKVRTAYPSLRLIHAVRGYWLTNKVPIKRPSTGLLMYTLATRFCDEIHLYGFWPFPKDLNGKAVKYHYYDDLKYRYFSNASPHRMPLEFKTLNVLHNRGALKLTTGKCMKQ.

The Cytoplasmic portion of the chain corresponds to 1–7 (MRSIRKR). Residues 8 to 20 (WTICTISLLLIFY) traverse the membrane as a helical; Signal-anchor for type II membrane protein segment. At 21–359 (KTKEIARTEE…KLTTGKCMKQ (339 aa)) the chain is on the lumenal side. 3 N-linked (GlcNAc...) asparagine glycosylation sites follow: Asn-50, Asn-74, and Asn-119. Disulfide bonds link Cys-142-Cys-292 and Cys-156-Cys-356. Residues Asn-147 and Asn-170 each contribute to the CMP-N-acetyl-beta-neuraminate site. Residues Asn-204 and Asn-219 are each glycosylated (N-linked (GlcNAc...) asparagine). CMP-N-acetyl-beta-neuraminate contacts are provided by Ser-279, Thr-280, Gly-281, and Trp-301. His-331 functions as the Proton donor/acceptor in the catalytic mechanism.

Belongs to the glycosyltransferase 29 family. Autopolysialylated.

It localises to the golgi apparatus membrane. The protein resides in the secreted. The catalysed reaction is [N-acetyl-alpha-D-neuraminosyl-(2-&gt;8)](n) + CMP-N-acetyl-beta-neuraminate = [N-acetyl-alpha-D-neuraminosyl-(2-&gt;8)](n+1) + CMP + H(+). It functions in the pathway protein modification; protein glycosylation. Functionally, catalyzes the transfer of a sialic acid from a CMP-linked sialic acid donor onto a terminal alpha-2,3-, alpha-2,6-, or alpha-2,8-linked sialic acid of an N-linked glycan protein acceptor through alpha-2,8-linkages. Therefore, participates in polysialic acid synthesis on various sialylated N-acetyllactosaminyl oligosaccharides, including NCAM1 N-glycans, FETUB N-glycans and AHSG. It is noteworthy that alpha-2,3-linked sialic acid is apparently a better acceptor than alpha-2,6-linked sialic acid. The chain is CMP-N-acetylneuraminate-poly-alpha-2,8-sialyltransferase from Cricetulus griseus (Chinese hamster).